The chain runs to 555 residues: CTP synthase (555 aa).

Residues 1–265 (MTRYIFITGG…GNRVCEKLNI (265 aa)) are amidoligase domain. Residue S13 participates in CTP binding. A UTP-binding site is contributed by S13. ATP-binding positions include 14-19 (SLGKGI) and D71. D71 and E139 together coordinate Mg(2+). Residues 146-148 (DIE), 186-191 (KTKPTQ), and K222 each bind CTP. UTP contacts are provided by residues 186 to 191 (KTKPTQ) and K222. The Glutamine amidotransferase type-1 domain maps to 290 to 541 (TVAVVGKYVD…IKAGLAAKEA (252 aa)). G351 serves as a coordination point for L-glutamine. The active-site Nucleophile; for glutamine hydrolysis is C378. Residues 379-382 (LGMQ), E402, and R469 contribute to the L-glutamine site. Active-site residues include H514 and E516.

The protein belongs to the CTP synthase family. In terms of assembly, homotetramer.

The catalysed reaction is UTP + L-glutamine + ATP + H2O = CTP + L-glutamate + ADP + phosphate + 2 H(+). It catalyses the reaction L-glutamine + H2O = L-glutamate + NH4(+). It carries out the reaction UTP + NH4(+) + ATP = CTP + ADP + phosphate + 2 H(+). Its pathway is pyrimidine metabolism; CTP biosynthesis via de novo pathway; CTP from UDP: step 2/2. With respect to regulation, allosterically activated by GTP, when glutamine is the substrate; GTP has no effect on the reaction when ammonia is the substrate. The allosteric effector GTP functions by stabilizing the protein conformation that binds the tetrahedral intermediate(s) formed during glutamine hydrolysis. Inhibited by the product CTP, via allosteric rather than competitive inhibition. Catalyzes the ATP-dependent amination of UTP to CTP with either L-glutamine or ammonia as the source of nitrogen. Regulates intracellular CTP levels through interactions with the four ribonucleotide triphosphates. The chain is CTP synthase from Coxiella burnetii (strain CbuK_Q154) (Coxiella burnetii (strain Q154)).